The primary structure comprises 261 residues: Thiazole synthase (261 aa).

Lys102 serves as the catalytic Schiff-base intermediate with DXP. 1-deoxy-D-xylulose 5-phosphate contacts are provided by residues Gly163, 189–190 (AG), and 211–212 (NT).

The protein belongs to the ThiG family. Homotetramer. Forms heterodimers with either ThiH or ThiS.

The protein localises to the cytoplasm. It catalyses the reaction [ThiS sulfur-carrier protein]-C-terminal-Gly-aminoethanethioate + 2-iminoacetate + 1-deoxy-D-xylulose 5-phosphate = [ThiS sulfur-carrier protein]-C-terminal Gly-Gly + 2-[(2R,5Z)-2-carboxy-4-methylthiazol-5(2H)-ylidene]ethyl phosphate + 2 H2O + H(+). Its pathway is cofactor biosynthesis; thiamine diphosphate biosynthesis. In terms of biological role, catalyzes the rearrangement of 1-deoxy-D-xylulose 5-phosphate (DXP) to produce the thiazole phosphate moiety of thiamine. Sulfur is provided by the thiocarboxylate moiety of the carrier protein ThiS. In vitro, sulfur can be provided by H(2)S. This chain is Thiazole synthase, found in Acinetobacter baylyi (strain ATCC 33305 / BD413 / ADP1).